The sequence spans 247 residues: Ribonuclease PH (247 aa).

Phosphate-binding positions include Arg87 and 125–127 (GTR).

This sequence belongs to the RNase PH family. In terms of assembly, homohexameric ring arranged as a trimer of dimers.

It catalyses the reaction tRNA(n+1) + phosphate = tRNA(n) + a ribonucleoside 5'-diphosphate. Its function is as follows. Phosphorolytic 3'-5' exoribonuclease that plays an important role in tRNA 3'-end maturation. Removes nucleotide residues following the 3'-CCA terminus of tRNAs; can also add nucleotides to the ends of RNA molecules by using nucleoside diphosphates as substrates, but this may not be physiologically important. Probably plays a role in initiation of 16S rRNA degradation (leading to ribosome degradation) during starvation. The sequence is that of Ribonuclease PH from Frankia casuarinae (strain DSM 45818 / CECT 9043 / HFP020203 / CcI3).